Here is a 225-residue protein sequence, read N- to C-terminus: PKHD-type hydroxylase Smlt1146 (225 aa).

In terms of domain architecture, Fe2OG dioxygenase spans 78 to 177 (KYLPPRFNRY…RVASFFWVQS (100 aa)). Fe cation is bound by residues His96, Asp98, and His158. Residue Arg168 participates in 2-oxoglutarate binding.

Fe(2+) is required as a cofactor. It depends on L-ascorbate as a cofactor.

This Stenotrophomonas maltophilia (strain K279a) protein is PKHD-type hydroxylase Smlt1146.